Reading from the N-terminus, the 217-residue chain is High frequency lysogenization protein HflD homolog (217 aa).

The protein belongs to the HflD family.

The protein localises to the cytoplasm. The protein resides in the cell membrane. The polypeptide is High frequency lysogenization protein HflD homolog (Buchnera aphidicola subsp. Baizongia pistaciae (strain Bp)).